Here is a 339-residue protein sequence, read N- to C-terminus: Thymidine kinase (339 aa).

11–18 provides a ligand contact to ATP; it reads GAFGIGKT. Glu-39 serves as the catalytic Proton acceptor. 2 residues coordinate substrate: Tyr-59 and Gln-83. Arg-176 contributes to the ATP binding site. Arg-182 is a binding site for substrate.

This sequence belongs to the herpesviridae thymidine kinase family. As to quaternary structure, homodimer.

It catalyses the reaction thymidine + ATP = dTMP + ADP + H(+). In terms of biological role, catalyzes the transfer of the gamma-phospho group of ATP to thymidine to generate dTMP in the salvage pathway of pyrimidine synthesis. The dTMP serves as a substrate for DNA polymerase during viral DNA replication. Allows the virus to be reactivated and to grow in non-proliferative cells lacking a high concentration of phosphorylated nucleic acid precursors. The sequence is that of Thymidine kinase from Amazona oratrix (yellow-headed parrot).